The primary structure comprises 632 residues: tRNA uridine 5-carboxymethylaminomethyl modification enzyme MnmG (632 aa).

Residues 15–20 (GAGHAG), Ile-127, and Ser-182 contribute to the FAD site. Residue 276–290 (GPRYCPSIEDKIVRF) participates in NAD(+) binding. Gln-373 serves as a coordination point for FAD.

It belongs to the MnmG family. As to quaternary structure, homodimer. Heterotetramer of two MnmE and two MnmG subunits. It depends on FAD as a cofactor.

It is found in the cytoplasm. Functionally, NAD-binding protein involved in the addition of a carboxymethylaminomethyl (cmnm) group at the wobble position (U34) of certain tRNAs, forming tRNA-cmnm(5)s(2)U34. This Streptococcus pyogenes serotype M28 (strain MGAS6180) protein is tRNA uridine 5-carboxymethylaminomethyl modification enzyme MnmG.